Consider the following 456-residue polypeptide: tRNA modification GTPase MnmE (456 aa).

(6S)-5-formyl-5,6,7,8-tetrahydrofolate is bound by residues R23, E80, and K122. Residues 218 to 380 (AKRIVIVGPP…LKKHLSNRQK (163 aa)) form the TrmE-type G domain. N228 is a binding site for K(+). GTP contacts are provided by residues 228–233 (NAGKSS), 247–253 (TDLPGTT), and 272–275 (DTAG). A Mg(2+)-binding site is contributed by S232. K(+) is bound by residues T247, L249, and T252. Residue T253 coordinates Mg(2+). Residue K456 participates in (6S)-5-formyl-5,6,7,8-tetrahydrofolate binding.

The protein belongs to the TRAFAC class TrmE-Era-EngA-EngB-Septin-like GTPase superfamily. TrmE GTPase family. In terms of assembly, homodimer. Heterotetramer of two MnmE and two MnmG subunits. The cofactor is K(+).

It is found in the cytoplasm. Exhibits a very high intrinsic GTPase hydrolysis rate. Involved in the addition of a carboxymethylaminomethyl (cmnm) group at the wobble position (U34) of certain tRNAs, forming tRNA-cmnm(5)s(2)U34. This chain is tRNA modification GTPase MnmE, found in Buchnera aphidicola subsp. Schizaphis graminum (strain Sg).